A 681-amino-acid polypeptide reads, in one-letter code: Type VI secretion system spike protein VgrG2 (681 aa).

A disordered region spans residues 284–309; that stretch reads AVAGSGKSNSSALQPGQTFSLTEHPN. Over residues 289–309 the composition is skewed to polar residues; the sequence is GKSNSSALQPGQTFSLTEHPN.

The protein belongs to the VgrG protein family.

Part of the type VI secretion system specialized secretion system, which delivers several virulence factors in both prokaryotic and eukaryotic cells during infection. Plays an essential role in bacterial mobility and biofilm formation. This chain is Type VI secretion system spike protein VgrG2, found in Aeromonas hydrophila.